The primary structure comprises 90 residues: Small ribosomal subunit protein bS16 (90 aa).

Belongs to the bacterial ribosomal protein bS16 family.

The sequence is that of Small ribosomal subunit protein bS16 from Lactococcus lactis subsp. lactis (strain IL1403) (Streptococcus lactis).